The sequence spans 186 residues: High mobility group protein B4 (186 aa).

DNA-binding regions (HMG box) lie at residues 9–79 (PKAN…MNYV) and 93–161 (PRRP…ELYR). The tract at residues 77-98 (NYVGKRKKRRKRDPQEPRRPPS) is disordered.

It belongs to the HMGB family.

Its subcellular location is the nucleus. It localises to the chromosome. This is High mobility group protein B4 (HMGB4) from Homo sapiens (Human).